The following is a 250-amino-acid chain: Ditrans,polycis-undecaprenyl-diphosphate synthase ((2E,6E)-farnesyl-diphosphate specific) (250 aa).

Aspartate 20 is a catalytic residue. Mg(2+) is bound at residue aspartate 20. Substrate contacts are provided by residues 21-24 (GNGR), tryptophan 25, arginine 33, histidine 37, and 65-67 (SSE). Asparagine 68 (proton acceptor) is an active-site residue. Substrate is bound by residues tryptophan 69, arginine 71, arginine 188, and 194-196 (RIS). Glutamate 207 lines the Mg(2+) pocket.

Belongs to the UPP synthase family. In terms of assembly, homodimer. It depends on Mg(2+) as a cofactor.

It carries out the reaction 8 isopentenyl diphosphate + (2E,6E)-farnesyl diphosphate = di-trans,octa-cis-undecaprenyl diphosphate + 8 diphosphate. In terms of biological role, catalyzes the sequential condensation of isopentenyl diphosphate (IPP) with (2E,6E)-farnesyl diphosphate (E,E-FPP) to yield (2Z,6Z,10Z,14Z,18Z,22Z,26Z,30Z,34E,38E)-undecaprenyl diphosphate (di-trans,octa-cis-UPP). UPP is the precursor of glycosyl carrier lipid in the biosynthesis of bacterial cell wall polysaccharide components such as peptidoglycan and lipopolysaccharide. The sequence is that of Ditrans,polycis-undecaprenyl-diphosphate synthase ((2E,6E)-farnesyl-diphosphate specific) from Vibrio cholerae serotype O1 (strain ATCC 39315 / El Tor Inaba N16961).